The sequence spans 713 residues: Polyribonucleotide nucleotidyltransferase (713 aa).

Residues Asp-485 and Asp-491 each contribute to the Mg(2+) site. The KH domain occupies 552-611 (PRIHTIKINPEKIKDVIGKGGSVIRALTEETGTNIELDDDGTVRISAVANEAAMEAIRRI). The S1 motif domain occupies 621-689 (NRIYEGKVVR…RQGRVRLSIK (69 aa)).

Belongs to the polyribonucleotide nucleotidyltransferase family. As to quaternary structure, component of the RNA degradosome, which is a multiprotein complex involved in RNA processing and mRNA degradation. It depends on Mg(2+) as a cofactor.

Its subcellular location is the cytoplasm. It carries out the reaction RNA(n+1) + phosphate = RNA(n) + a ribonucleoside 5'-diphosphate. Its function is as follows. Involved in mRNA degradation. Catalyzes the phosphorolysis of single-stranded polyribonucleotides processively in the 3'- to 5'-direction. The protein is Polyribonucleotide nucleotidyltransferase of Aeromonas salmonicida (strain A449).